A 316-amino-acid polypeptide reads, in one-letter code: 4-diphosphocytidyl-2-C-methyl-D-erythritol kinase (316 aa).

K23 is an active-site residue. 108–118 (PVAGGMAGGSA) provides a ligand contact to ATP. D150 is a catalytic residue.

Belongs to the GHMP kinase family. IspE subfamily.

The catalysed reaction is 4-CDP-2-C-methyl-D-erythritol + ATP = 4-CDP-2-C-methyl-D-erythritol 2-phosphate + ADP + H(+). It participates in isoprenoid biosynthesis; isopentenyl diphosphate biosynthesis via DXP pathway; isopentenyl diphosphate from 1-deoxy-D-xylulose 5-phosphate: step 3/6. Functionally, catalyzes the phosphorylation of the position 2 hydroxy group of 4-diphosphocytidyl-2C-methyl-D-erythritol. The polypeptide is 4-diphosphocytidyl-2-C-methyl-D-erythritol kinase (Mycobacterium avium (strain 104)).